A 254-amino-acid polypeptide reads, in one-letter code: 3-deoxy-manno-octulosonate cytidylyltransferase (254 aa).

The protein belongs to the KdsB family.

The protein localises to the cytoplasm. It catalyses the reaction 3-deoxy-alpha-D-manno-oct-2-ulosonate + CTP = CMP-3-deoxy-beta-D-manno-octulosonate + diphosphate. The protein operates within nucleotide-sugar biosynthesis; CMP-3-deoxy-D-manno-octulosonate biosynthesis; CMP-3-deoxy-D-manno-octulosonate from 3-deoxy-D-manno-octulosonate and CTP: step 1/1. Its pathway is bacterial outer membrane biogenesis; lipopolysaccharide biosynthesis. In terms of biological role, activates KDO (a required 8-carbon sugar) for incorporation into bacterial lipopolysaccharide in Gram-negative bacteria. The protein is 3-deoxy-manno-octulosonate cytidylyltransferase of Pseudomonas paraeruginosa (strain DSM 24068 / PA7) (Pseudomonas aeruginosa (strain PA7)).